A 132-amino-acid chain; its full sequence is MAVNDPLGDMLTRIRNAQMRRKGKVQTPGSRLRAHVLDVLQSEGYIRGYSTTEYGNGRTEFEVELKYFDGLPVIREIQRVSKPGRRVYAAVDAMPRVANGLGITIVSTPKGVMADHAAREANVGGEVLCRVF.

Belongs to the universal ribosomal protein uS8 family. In terms of assembly, part of the 30S ribosomal subunit. Contacts proteins S5 and S12.

In terms of biological role, one of the primary rRNA binding proteins, it binds directly to 16S rRNA central domain where it helps coordinate assembly of the platform of the 30S subunit. The sequence is that of Small ribosomal subunit protein uS8 from Methylocella silvestris (strain DSM 15510 / CIP 108128 / LMG 27833 / NCIMB 13906 / BL2).